The following is a 393-amino-acid chain: Interleukin-1 receptor type 2 (393 aa).

The first 13 residues, 1–13 (MFRLYVLVMGVSA), serve as a signal peptide directing secretion. Residues 14–347 (FTLQPAAHTG…RTTVKEPPPT (334 aa)) are Extracellular-facing. Cystine bridges form between Cys28/Cys116, Cys50/Cys108, and Cys152/Cys207. 3 consecutive Ig-like C2-type domains span residues 29–120 (PVRG…DKVS), 134–221 (PFIS…YNIT), and 237–342 (PVII…TTVK). N-linked (GlcNAc...) asparagine glycans are attached at residues Asn66, Asn72, and Asn112. N-linked (GlcNAc...) asparagine glycosylation is found at Asn219 and Asn277. Cys258 and Cys326 are disulfide-bonded. A helical membrane pass occupies residues 348-368 (FSWGIVLAPLALAFLVLGGIW). At 369–393 (MHRRCKHRTGKADGLTVLRPHHQDF) the chain is on the cytoplasmic side.

This sequence belongs to the interleukin-1 receptor family. As to quaternary structure, forms a non-signaling receptor complex consisting of IL1R2 and IL1RAP. A soluble form (sIL1R2) can also be produced by proteolytic cleavage at the cell surface (shedding) involving a metalloproteinase.

It is found in the secreted. Its subcellular location is the cell membrane. Non-signaling receptor for IL1A, IL1B and IL1RN. Reduces IL1B activities. Serves as a decoy receptor by competitive binding to IL1B and preventing its binding to IL1R1. Also modulates cellular response through non-signaling association with IL1RAP after binding to IL1B. IL1R2 (membrane and secreted forms) preferentially binds IL1B and poorly IL1A and IL1RN. The secreted IL1R2 recruits secreted IL1RAP with high affinity; this complex formation may be the dominant mechanism for neutralization of IL1B by secreted/soluble receptors. This is Interleukin-1 receptor type 2 (IL1R2) from Chlorocebus aethiops (Green monkey).